The following is a 309-amino-acid chain: Protease HtpX homolog (309 aa).

Helical transmembrane passes span 7–27 (AILL…IGGA) and 28–48 (SGAM…YWNS). Residue His130 participates in Zn(2+) binding. The active site involves Glu131. Residue His134 coordinates Zn(2+). 2 helical membrane passes run 145-165 (VTAT…FFGG) and 173-193 (GLGV…AMLV). Residue Glu202 participates in Zn(2+) binding.

Belongs to the peptidase M48B family. It depends on Zn(2+) as a cofactor.

It is found in the cell inner membrane. This is Protease HtpX homolog from Rhodopseudomonas palustris (strain BisA53).